Reading from the N-terminus, the 242-residue chain is Phosphoribosylaminoimidazole-succinocarboxamide synthase (242 aa).

This sequence belongs to the SAICAR synthetase family.

The enzyme catalyses 5-amino-1-(5-phospho-D-ribosyl)imidazole-4-carboxylate + L-aspartate + ATP = (2S)-2-[5-amino-1-(5-phospho-beta-D-ribosyl)imidazole-4-carboxamido]succinate + ADP + phosphate + 2 H(+). The protein operates within purine metabolism; IMP biosynthesis via de novo pathway; 5-amino-1-(5-phospho-D-ribosyl)imidazole-4-carboxamide from 5-amino-1-(5-phospho-D-ribosyl)imidazole-4-carboxylate: step 1/2. The chain is Phosphoribosylaminoimidazole-succinocarboxamide synthase (purC) from Methanocaldococcus jannaschii (strain ATCC 43067 / DSM 2661 / JAL-1 / JCM 10045 / NBRC 100440) (Methanococcus jannaschii).